A 93-amino-acid chain; its full sequence is Large ribosomal subunit protein uL23cz/uL23cy (93 aa).

This sequence belongs to the universal ribosomal protein uL23 family. In terms of assembly, part of the 50S ribosomal subunit.

Its subcellular location is the plastid. It localises to the chloroplast. In terms of biological role, binds to 23S rRNA. This chain is Large ribosomal subunit protein uL23cz/uL23cy (rpl23-A), found in Gossypium barbadense (Sea Island cotton).